A 180-amino-acid chain; its full sequence is Large ribosomal subunit protein uL5 (180 aa).

It belongs to the universal ribosomal protein uL5 family. In terms of assembly, part of the 50S ribosomal subunit; part of the 5S rRNA/L5/L18/L25 subcomplex. Contacts the 5S rRNA and the P site tRNA. Forms a bridge to the 30S subunit in the 70S ribosome.

This is one of the proteins that bind and probably mediate the attachment of the 5S RNA into the large ribosomal subunit, where it forms part of the central protuberance. In the 70S ribosome it contacts protein S13 of the 30S subunit (bridge B1b), connecting the 2 subunits; this bridge is implicated in subunit movement. Contacts the P site tRNA; the 5S rRNA and some of its associated proteins might help stabilize positioning of ribosome-bound tRNAs. This chain is Large ribosomal subunit protein uL5, found in Brevibacillus brevis (strain 47 / JCM 6285 / NBRC 100599).